Consider the following 398-residue polypeptide: Metal tolerance protein 1 (398 aa).

Over 1 to 56 (MESSSPHHSHIVEVNVGKSDEERIIVASKVCGEAPCGFSDSKNASGDAHERSASMR) the chain is Cytoplasmic. The chain crosses the membrane as a helical span at residues 57-77 (KLCIAVVLCLVFMSVEVVGGI). Topologically, residues 78–89 (KANSLAILTDAA) are vacuolar. A helical transmembrane segment spans residues 90–110 (HLLSDVAAFAISLFSLWAAGW). The Cytoplasmic portion of the chain corresponds to 111-122 (EATPRQTYGFFR). Residues 123–143 (IEILGALVSIQLIWLLTGILV) form a helical membrane-spanning segment. Residues 144–159 (YEAIIRIVTETSEVNG) are Vacuolar-facing. The helical transmembrane segment at 160–180 (FLMFLVAAFGLVVNIIMAVLL) threads the bilayer. Over 181 to 263 (GHDHGHSHGH…KRNINLQGAY (83 aa)) the chain is Cytoplasmic. Residues 182–232 (HDHGHSHGHGHGHGHDHHNHSHGVTVTTHHHHHDHEHGHSHGHGEDKHHAH) are required for zinc-binding. The interval 186–232 (HSHGHGHGHGHDHHNHSHGVTVTTHHHHHDHEHGHSHGHGEDKHHAH) is disordered. Over residues 187–202 (SHGHGHGHGHDHHNHS) the composition is skewed to basic residues. Over residues 216-232 (HEHGHSHGHGEDKHHAH) the composition is skewed to basic and acidic residues. Residues 264–284 (LHVLGDSIQSVGVMIGGAIIW) traverse the membrane as a helical segment. Residues 285–290 (YNPEWK) lie on the Vacuolar side of the membrane. A helical membrane pass occupies residues 291–311 (IVDLICTLAFSVIVLGTTINM). Over 312–398 (IRNILEVLME…ISHVTIQIER (87 aa)) the chain is Cytoplasmic.

Belongs to the cation diffusion facilitator (CDF) transporter (TC 2.A.4) family. SLC30A subfamily. As to expression, ubiquitously expressed at low levels.

It is found in the vacuole membrane. Mediates zinc accumulation in roots and confers resistance to zinc. Involved in sequestration of excess zinc in the cytoplasm into vacuoles to maintain zinc homeostasis. Can also transport cadmium with a low efficiency. This Arabidopsis thaliana (Mouse-ear cress) protein is Metal tolerance protein 1.